Here is a 307-residue protein sequence, read N- to C-terminus: Protease HtpX homolog (307 aa).

A helical transmembrane segment spans residues 16-36; that stretch reads LFMGVGYLIGGAAGAMIALVV. A Zn(2+)-binding site is contributed by histidine 130. Glutamate 131 is an active-site residue. Histidine 134 provides a ligand contact to Zn(2+). 2 helical membrane-spanning segments follow: residues 145–165 and 172–192; these read ITAT…FFGG and GPGI…AMLV. Glutamate 201 is a Zn(2+) binding site. A disordered region spans residues 278–307; it reads AGQSGSATPDPAPAPRGPWNGGAPRRGPWG.

The protein belongs to the peptidase M48B family. Requires Zn(2+) as cofactor.

The protein localises to the cell inner membrane. This is Protease HtpX homolog from Nitrobacter hamburgensis (strain DSM 10229 / NCIMB 13809 / X14).